A 696-amino-acid chain; its full sequence is C2 domain-containing protein 2 (696 aa).

A helical transmembrane segment spans residues 8 to 28; the sequence is VQWLFLVSLFVAALGTVGLYL. Residues 45–238 enclose the SMP-LBD domain; sequence EPDELRRRES…PTQVKEAQSL (194 aa). Ser-54 bears the Phosphoserine mark. In terms of domain architecture, C2 spans 241–357; it reads PSSTAQEPCP…RKQPNGPQTF (117 aa). Ser-436 is subject to Phosphoserine. Thr-440 is modified (phosphothreonine). The tract at residues 551–611 is disordered; sequence ATEASATTPP…DGDELSESSL (61 aa). Residues 573-588 are compositionally biased toward basic and acidic residues; that stretch reads KPRENDLDSWELEKES. Ser-581 carries the post-translational modification Phosphoserine.

The protein resides in the membrane. The protein is C2 domain-containing protein 2 of Mus musculus (Mouse).